Here is a 293-residue protein sequence, read N- to C-terminus: Ribosomal protein L11 methyltransferase (293 aa).

S-adenosyl-L-methionine contacts are provided by T145, G166, D188, and N230.

The protein belongs to the methyltransferase superfamily. PrmA family.

Its subcellular location is the cytoplasm. It catalyses the reaction L-lysyl-[protein] + 3 S-adenosyl-L-methionine = N(6),N(6),N(6)-trimethyl-L-lysyl-[protein] + 3 S-adenosyl-L-homocysteine + 3 H(+). Functionally, methylates ribosomal protein L11. The protein is Ribosomal protein L11 methyltransferase of Yersinia pseudotuberculosis serotype O:3 (strain YPIII).